Consider the following 297-residue polypeptide: GTPase Era (297 aa).

In terms of domain architecture, Era-type G spans 7–174 (RSGFVSIVGR…VQLVHGLLPE (168 aa)). The segment at 15–22 (GRPNVGKS) is G1. 15–22 (GRPNVGKS) is a GTP binding site. The tract at residues 41–45 (QTTRN) is G2. The interval 62–65 (DTPG) is G3. Residues 62 to 66 (DTPGI) and 124 to 127 (NKID) each bind GTP. The G4 stretch occupies residues 124–127 (NKID). Residues 153–155 (VSA) are G5. The region spanning 205-282 (THDEVPYSTA…FLELFVRVSG (78 aa)) is the KH type-2 domain.

This sequence belongs to the TRAFAC class TrmE-Era-EngA-EngB-Septin-like GTPase superfamily. Era GTPase family. In terms of assembly, monomer.

The protein localises to the cytoplasm. It is found in the cell inner membrane. An essential GTPase that binds both GDP and GTP, with rapid nucleotide exchange. Plays a role in 16S rRNA processing and 30S ribosomal subunit biogenesis and possibly also in cell cycle regulation and energy metabolism. The chain is GTPase Era from Geobacter sp. (strain M21).